The chain runs to 77 residues: Protein ImpC (77 aa).

It belongs to the DinI family.

This Salmonella typhimurium protein is Protein ImpC (impC).